Consider the following 367-residue polypeptide: DNA polymerase IV (367 aa).

The UmuC domain maps to 14–198 (IIHIDMDAFF…LPIAKFHGVG (185 aa)). The Mg(2+) site is built by Asp18 and Asp116. Residue Glu117 is part of the active site.

It belongs to the DNA polymerase type-Y family. Monomer. It depends on Mg(2+) as a cofactor.

The protein localises to the cytoplasm. It carries out the reaction DNA(n) + a 2'-deoxyribonucleoside 5'-triphosphate = DNA(n+1) + diphosphate. In terms of biological role, poorly processive, error-prone DNA polymerase involved in untargeted mutagenesis. Copies undamaged DNA at stalled replication forks, which arise in vivo from mismatched or misaligned primer ends. These misaligned primers can be extended by PolIV. Exhibits no 3'-5' exonuclease (proofreading) activity. May be involved in translesional synthesis, in conjunction with the beta clamp from PolIII. The polypeptide is DNA polymerase IV (Streptococcus thermophilus (strain ATCC BAA-491 / LMD-9)).